Here is a 70-residue protein sequence, read N- to C-terminus: DNA-directed RNA polymerase subunit omega (70 aa).

Belongs to the RNA polymerase subunit omega family. As to quaternary structure, the RNAP catalytic core consists of 2 alpha, 1 beta, 1 beta' and 1 omega subunit. When a sigma factor is associated with the core the holoenzyme is formed, which can initiate transcription.

The catalysed reaction is RNA(n) + a ribonucleoside 5'-triphosphate = RNA(n+1) + diphosphate. Functionally, promotes RNA polymerase assembly. Latches the N- and C-terminal regions of the beta' subunit thereby facilitating its interaction with the beta and alpha subunits. The protein is DNA-directed RNA polymerase subunit omega of Thermoanaerobacter pseudethanolicus (strain ATCC 33223 / 39E) (Clostridium thermohydrosulfuricum).